The chain runs to 324 residues: Putative S-adenosyl-L-methionine-dependent methyltransferase MUL_0818 (324 aa).

Residues Asp138 and 167-168 (DL) contribute to the S-adenosyl-L-methionine site.

Belongs to the UPF0677 family.

In terms of biological role, exhibits S-adenosyl-L-methionine-dependent methyltransferase activity. The protein is Putative S-adenosyl-L-methionine-dependent methyltransferase MUL_0818 of Mycobacterium ulcerans (strain Agy99).